The primary structure comprises 469 residues: Beta-1,3-xylanase (469 aa).

The first 22 residues, 1–22, serve as a signal peptide directing secretion; the sequence is MKKLAKMISIATLGACAFSAHA. The 271-residue stretch at 23–293 folds into the GH26 domain; sequence LDGKLVPNEG…LKGFTYINAD (271 aa). Glutamate 138 acts as the Proton donor in catalysis. Glutamate 234 functions as the Nucleophile in the catalytic mechanism. Gly residues predominate over residues 352 to 374; sequence DNGGDNGGDNGGDNGGDNGGDNG. Residues 352–380 form a disordered region; that stretch reads DNGGDNGGDNGGDNGGDNGGDNGGTEPPE. Residues 377–469 are carbohydrate binding module (CBM); that stretch reads EPPENCQDDF…NITFTTQVCN (93 aa). 2 cysteine pairs are disulfide-bonded: cysteine 382-cysteine 468 and cysteine 413-cysteine 418.

The protein belongs to the glycosyl hydrolase 26 family.

It catalyses the reaction Random hydrolysis of (1-&gt;3)-beta-D-glycosidic linkages in (1-&gt;3)-beta-D-xylans.. With respect to regulation, completely inhibited by CuCl(2), FeCl(3), HgCl(2) and N-bromosuccinimide. Moderately inhibited by AgCl, AlCl(3), Pb(CH(3)COO)(2) and dithiothreitol. BaCl(2), CaCl(2), KCl, MgCl(2), MnCl(2), NaCl, ZnCl(2), ethylenediaminetetraacetic acid, N-ethylmaleimide, iodoacetic acid and p-chloromercuribenzoic acid have little or no effect on activity. Catalyzes the hydrolysis of beta-1,3-xylan into oligosaccharides, mainly xylotriose and xylobiose with smaller amounts of xylotetraose, xylose, xylopentaose and xylohexaose. Does not hydrolyze xylobiose, p-nitrophenyl-beta-xyloside, beta-1,4-xylan, carboxymethylcellulose, curdlan, glucomannan or beta-1,4-mannan. The chain is Beta-1,3-xylanase from Alcaligenes sp.